We begin with the raw amino-acid sequence, 334 residues long: Isopentenyl-diphosphate delta-isomerase (334 aa).

5–6 contributes to the substrate binding site; that stretch reads RK. Residues 60–62, serine 90, and asparagine 117 each bind FMN; that span reads AMT. Residue glutamine 147 coordinates substrate. Glutamate 148 contacts Mg(2+). FMN-binding positions include lysine 179, serine 204, threonine 209, 253 to 255, and 274 to 275; these read GVR and SR.

The protein belongs to the IPP isomerase type 2 family. Homooctamer. Dimer of tetramers. The cofactor is FMN. NADPH is required as a cofactor. Requires Mg(2+) as cofactor.

It is found in the cytoplasm. The enzyme catalyses isopentenyl diphosphate = dimethylallyl diphosphate. Involved in the biosynthesis of isoprenoids. Catalyzes the 1,3-allylic rearrangement of the homoallylic substrate isopentenyl (IPP) to its allylic isomer, dimethylallyl diphosphate (DMAPP). This chain is Isopentenyl-diphosphate delta-isomerase, found in Streptococcus gordonii (strain Challis / ATCC 35105 / BCRC 15272 / CH1 / DL1 / V288).